A 473-amino-acid polypeptide reads, in one-letter code: Ribulose bisphosphate carboxylase large chain (473 aa).

Positions 116 and 166 each coordinate substrate. The Proton acceptor role is filled by Lys-168. Position 170 (Lys-170) interacts with substrate. Lys-194, Asp-196, and Glu-197 together coordinate Mg(2+). Lys-194 is modified (N6-carboxylysine). His-287 functions as the Proton acceptor in the catalytic mechanism. 3 residues coordinate substrate: Arg-288, His-320, and Ser-372.

Belongs to the RuBisCO large chain family. Type I subfamily. In terms of assembly, heterohexadecamer of 8 large chains and 8 small chains. Requires Mg(2+) as cofactor.

It carries out the reaction 2 (2R)-3-phosphoglycerate + 2 H(+) = D-ribulose 1,5-bisphosphate + CO2 + H2O. It catalyses the reaction D-ribulose 1,5-bisphosphate + O2 = 2-phosphoglycolate + (2R)-3-phosphoglycerate + 2 H(+). Functionally, ruBisCO catalyzes two reactions: the carboxylation of D-ribulose 1,5-bisphosphate, the primary event in carbon dioxide fixation, as well as the oxidative fragmentation of the pentose substrate. Both reactions occur simultaneously and in competition at the same active site. The protein is Ribulose bisphosphate carboxylase large chain of Nitrosospira sp. (strain TCH716).